The primary structure comprises 162 residues: Onchocystatin (162 aa).

The signal sequence occupies residues 1-32 (MLTIKDGTLLIHLLLFSVVALVQLQGAKSARA). The segment at 30–54 (ARAKNPSKMESKTGENQDRPVLLGG) is disordered. The span at 36-47 (SKMESKTGENQD) shows a compositional bias: basic and acidic residues. Positions 97 to 101 (QVVAG) match the Secondary area of contact motif. An intrachain disulfide couples cysteine 115 to cysteine 128.

This sequence belongs to the cystatin family. As to expression, expressed in the cuticle of L3 and L4 larvae, female adult, and in the eggshell of developing microfilariae.

Functionally, cysteine protease inhibitor which inhibits members of the peptidase C1 family. In the human host, inhibits CTSL/cathepsin L and CTSS/cathepsin S and to a lesser extent CTSB/cathepsin B which may cause defects in antigen processing and thereby impair antigen-driven T cell proliferation. This Onchocerca volvulus protein is Onchocystatin.